Here is a 98-residue protein sequence, read N- to C-terminus: NADH-ubiquinone oxidoreductase chain 4L (98 aa).

3 helical membrane-spanning segments follow: residues 1-21, 29-49, and 59-79; these read MSLI…GLLM, ALLC…LTAL, and MPII…ALLV.

It belongs to the complex I subunit 4L family. As to quaternary structure, core subunit of respiratory chain NADH dehydrogenase (Complex I) which is composed of 45 different subunits.

The protein resides in the mitochondrion inner membrane. It catalyses the reaction a ubiquinone + NADH + 5 H(+)(in) = a ubiquinol + NAD(+) + 4 H(+)(out). Its function is as follows. Core subunit of the mitochondrial membrane respiratory chain NADH dehydrogenase (Complex I) which catalyzes electron transfer from NADH through the respiratory chain, using ubiquinone as an electron acceptor. Part of the enzyme membrane arm which is embedded in the lipid bilayer and involved in proton translocation. The chain is NADH-ubiquinone oxidoreductase chain 4L (MT-ND4L) from Hyperoodon ampullatus (Northern bottlenose whale).